Here is a 212-residue protein sequence, read N- to C-terminus: Negative modulator of initiation of replication (212 aa).

Interaction with DNA stretches follow at residues 113–114 (AV) and 144–148 (RTRVY).

It belongs to the SeqA family. As to quaternary structure, homodimer. Polymerizes to form helical filaments.

It localises to the cytoplasm. Negative regulator of replication initiation, which contributes to regulation of DNA replication and ensures that replication initiation occurs exactly once per chromosome per cell cycle. Binds to pairs of hemimethylated GATC sequences in the oriC region, thus preventing assembly of replication proteins and re-initiation at newly replicated origins. Repression is relieved when the region becomes fully methylated. The protein is Negative modulator of initiation of replication of Actinobacillus succinogenes (strain ATCC 55618 / DSM 22257 / CCUG 43843 / 130Z).